The chain runs to 1012 residues: 5'-3' exoribonuclease 2 (1012 aa).

The CCHC-type zinc-finger motif lies at 264-281 (GKCFLCGQEGHRAADCEG). 3 disordered regions span residues 411–439 (VQQRQSERFRRDKARDKARDNARDNAQAS), 888–976 (TFKD…QRQV), and 990–1012 (QRKKEKYLRKKAKYAQGAPPKTA). The segment covering 415–433 (QSERFRRDKARDKARDNAR) has biased composition (basic and acidic residues). Residues 904–914 (ITPKKMNSPQR) are compositionally biased toward polar residues. Basic and acidic residues-rich tracts occupy residues 918–928 (WKKDETPQSRE) and 950–962 (PQREFTREKKKEN). The span at 990 to 1002 (QRKKEKYLRKKAK) shows a compositional bias: basic residues.

It belongs to the 5'-3' exonuclease family. XRN2/RAT1 subfamily. Expressed in roots, leaves, stems and flowers.

It is found in the nucleus. In terms of biological role, possesses 5'-&gt;3' exoribonuclease activity. Acts as an endogenous post-transcriptional gene silencing (PTGS) suppressor. Degrades miRNA-derived loops, excised during miRNA maturation in the nucleus. Involved in pre-rRNA processing. Involved in the primary exonucleolytic shortening of the 5' external transcribed spacer (5'ETS), required for endonucleolytic processing at site P by the U3 snoRNP complex. Involved with XRN3 in the 5'-end processing of 5.8S and 25S rRNAs. Contributes with XRN3 to polyadenylation-dependent nuclear RNA surveillance. Involved in the degradation of aberrant polyadenylated pre-rRNA through 5'-end processing. The chain is 5'-3' exoribonuclease 2 from Arabidopsis thaliana (Mouse-ear cress).